Consider the following 80-residue polypeptide: MSPFAHLLALPVRAYRLVASPWVGHGCRFQPTCSAYALEALERHGAAKGGWLAARRVCRCHPWGGHGFDPVPGSEAPRQD.

The protein belongs to the UPF0161 family.

The protein resides in the cell inner membrane. In terms of biological role, could be involved in insertion of integral membrane proteins into the membrane. The chain is Putative membrane protein insertion efficiency factor from Paracoccus denitrificans (strain Pd 1222).